Consider the following 239-residue polypeptide: MQFSFLTLFPTLIESYFTDSILKRALQNGLISVEALNIRDYALDKYQKVDEPPISGGAGQVIRADVLGAALQTLTHSHIIFLSPCGKPFQQYDALRLSHKKHITFVCGRYEGFDERLVEQYANEVMSVGNFIVTGGELPALMLCDSIARHIQGVLGNADSLQGESFEDYLLEAPNFTKIFNQKIKFSATPSEYSKGNHSKISGLKKRLAICKTKYFRPDLYQAYRVFIEQQQLNNKVVK.

Residues G108 and 128–133 each bind S-adenosyl-L-methionine; that span reads VGNFIV.

Belongs to the RNA methyltransferase TrmD family. As to quaternary structure, homodimer.

The protein localises to the cytoplasm. It carries out the reaction guanosine(37) in tRNA + S-adenosyl-L-methionine = N(1)-methylguanosine(37) in tRNA + S-adenosyl-L-homocysteine + H(+). Its function is as follows. Specifically methylates guanosine-37 in various tRNAs. This chain is tRNA (guanine-N(1)-)-methyltransferase, found in Helicobacter hepaticus (strain ATCC 51449 / 3B1).